Reading from the N-terminus, the 74-residue chain is Protein WFDC9 (74 aa).

A signal peptide spans 1–19 (MKFWILLLTVSAHGIVVFL).

Its subcellular location is the secreted. This chain is Protein WFDC9 (Wfdc9), found in Rattus norvegicus (Rat).